We begin with the raw amino-acid sequence, 136 residues long: Putative covalently bound cell wall protein 22 (136 aa).

Residues 1–18 (MQFSTVASIAAIAAVASA) form the signal peptide. N-linked (GlcNAc...) asparagine glycans are attached at residues asparagine 21 and asparagine 82. The interval 73–110 (PLPTTEAPKNTTSPAPTEKPTEKPTEKPTQQGSSTQTV) is disordered. The segment covering 99-110 (KPTQQGSSTQTV) has biased composition (low complexity). Glycine 115 carries the GPI-anchor amidated glycine lipid modification. Residues 116-136 (AAVKALPAAGALLAGAAALLL) constitute a propeptide, removed in mature form.

This sequence belongs to the PGA59 family. Post-translationally, the GPI-anchor is attached to the protein in the endoplasmic reticulum and serves to target the protein to the cell surface. There, the glucosamine-inositol phospholipid moiety is cleaved off and the GPI-modified mannoprotein is covalently attached via its lipidless GPI glycan remnant to the 1,6-beta-glucan of the outer cell wall layer.

The protein resides in the secreted. Its subcellular location is the cell wall. It is found in the membrane. In terms of biological role, cell wall protein necessary for cell wall integrity. In Saccharomyces cerevisiae (strain ATCC 204508 / S288c) (Baker's yeast), this protein is Putative covalently bound cell wall protein 22 (CCW22).